The sequence spans 59 residues: MGKKKGKGAVELIALVCEETGIRNYTTTKNRRNKQEKLELMKYCPILRKHTLHKEGKIK.

The protein belongs to the bacterial ribosomal protein bL33 family.

The sequence is that of Large ribosomal subunit protein bL33 from Borrelia turicatae (strain 91E135).